The chain runs to 284 residues: Bifunctional protein FolD (284 aa).

Residues 166-168 (GAS) and Ile232 contribute to the NADP(+) site.

It belongs to the tetrahydrofolate dehydrogenase/cyclohydrolase family. In terms of assembly, homodimer.

The enzyme catalyses (6R)-5,10-methylene-5,6,7,8-tetrahydrofolate + NADP(+) = (6R)-5,10-methenyltetrahydrofolate + NADPH. It carries out the reaction (6R)-5,10-methenyltetrahydrofolate + H2O = (6R)-10-formyltetrahydrofolate + H(+). Its pathway is one-carbon metabolism; tetrahydrofolate interconversion. In terms of biological role, catalyzes the oxidation of 5,10-methylenetetrahydrofolate to 5,10-methenyltetrahydrofolate and then the hydrolysis of 5,10-methenyltetrahydrofolate to 10-formyltetrahydrofolate. The chain is Bifunctional protein FolD from Shewanella sp. (strain MR-7).